The sequence spans 235 residues: Motile sperm domain-containing protein 3 (235 aa).

2 disordered regions span residues 1-30 (MRRG…PSGP) and 143-170 (ELQG…PFPE). Residues 33–145 (PVLVFPPDLV…RAPAYPLELQ (113 aa)) enclose the MSP domain. Transmembrane regions (helical) follow at residues 180-200 (SFLL…LPLQ) and 213-233 (VSLG…MVFL).

Its subcellular location is the membrane. The protein is Motile sperm domain-containing protein 3 (MOSPD3) of Bos taurus (Bovine).